A 188-amino-acid chain; its full sequence is dCTP deaminase (188 aa).

DCTP contacts are provided by residues 111–116 (KSTYAR), 135–137 (TLE), Q156, Y170, K179, and Q180. E137 (proton donor/acceptor) is an active-site residue.

Belongs to the dCTP deaminase family. Homotrimer.

The enzyme catalyses dCTP + H2O + H(+) = dUTP + NH4(+). Its pathway is pyrimidine metabolism; dUMP biosynthesis; dUMP from dCTP (dUTP route): step 1/2. In terms of biological role, catalyzes the deamination of dCTP to dUTP. This Rickettsia canadensis (strain McKiel) protein is dCTP deaminase.